A 374-amino-acid chain; its full sequence is Alcohol dehydrogenase 1 (374 aa).

Ser1 is modified (N-acetylserine). Zn(2+)-binding residues include Cys46, His67, Cys97, Cys100, Cys103, Cys111, and Cys174. NAD(+)-binding positions include 199 to 204 (GLGGVG), Asp223, Lys228, 292 to 294 (VGV), and Arg369.

Belongs to the zinc-containing alcohol dehydrogenase family. Class-I subfamily. Homodimer. Zn(2+) is required as a cofactor.

It is found in the cytoplasm. It carries out the reaction a primary alcohol + NAD(+) = an aldehyde + NADH + H(+). It catalyses the reaction a secondary alcohol + NAD(+) = a ketone + NADH + H(+). This is Alcohol dehydrogenase 1 (ADH1) from Struthio camelus (Common ostrich).